Here is a 168-residue protein sequence, read N- to C-terminus: Protein-export protein SecB (168 aa).

The protein belongs to the SecB family. In terms of assembly, homotetramer, a dimer of dimers. One homotetramer interacts with 1 SecA dimer.

The protein resides in the cytoplasm. Functionally, one of the proteins required for the normal export of preproteins out of the cell cytoplasm. It is a molecular chaperone that binds to a subset of precursor proteins, maintaining them in a translocation-competent state. It also specifically binds to its receptor SecA. The chain is Protein-export protein SecB from Haemophilus influenzae (strain PittGG).